A 393-amino-acid polypeptide reads, in one-letter code: Probable acetyl-CoA acyltransferase (393 aa).

Residue Cys88 is the Acyl-thioester intermediate of the active site. Residues His349 and Cys378 each act as proton acceptor in the active site.

This sequence belongs to the thiolase-like superfamily. Thiolase family.

It localises to the cytoplasm. The enzyme catalyses 2 acetyl-CoA = acetoacetyl-CoA + CoA. The protein is Probable acetyl-CoA acyltransferase of Staphylococcus aureus (strain MSSA476).